The sequence spans 310 residues: Bacteriochlorophyll synthase 34 kDa chain (310 aa).

Polar residues predominate over residues 1–13 (MSDMSDQTRLSSP). The tract at residues 1–20 (MSDMSDQTRLSSPPSLPLHK) is disordered. The next 8 membrane-spanning stretches (helical) occupy residues 39 to 59 (VTWF…GALG), 67 to 87 (LLLG…VVND), 112 to 132 (HVYI…LFLG), 134 to 154 (QVAF…LRPI), 166 to 186 (LVAI…FAPL), 187 to 207 (TGES…IMTV), 248 to 268 (VIGL…AILL), and 287 to 307 (VFFN…AAIG).

The protein resides in the cell membrane. It functions in the pathway porphyrin-containing compound metabolism; bacteriochlorophyll biosynthesis (light-independent). Functionally, catalyzes the esterification of bacteriochlorophyllide a by geranylgeraniol-PPi. This Chloroflexus aurantiacus (strain ATCC 29366 / DSM 635 / J-10-fl) protein is Bacteriochlorophyll synthase 34 kDa chain (bchG).